A 303-amino-acid polypeptide reads, in one-letter code: MQDFSSLLLKLQEYWKNQGCLVIQPYDIPAGAGTFHPATLLRSLDKKPWNVAYVAPSRRPTDGRYGENPNRLGSYYQFQVVIKPSPSNIQELYLKSLEVLGINLNEHDIRFVEDNWESPTLGAWGLGWEVWLDGMEVTQFTYFQQVGGIACSPIPVEITYGLERLAMYVQKVENILEIEWAKKNHDSVNYAQVHLESEYEFSKYHFETASVKRLLEMFKNAQAEALHCLENKLPLPAYDFVMLCSHFFNILDARKAISVAERQNYILQIRDLAKGCALLYKEQEEEREERLKNALTKAENGVS.

It belongs to the class-II aminoacyl-tRNA synthetase family. As to quaternary structure, tetramer of two alpha and two beta subunits.

It localises to the cytoplasm. The enzyme catalyses tRNA(Gly) + glycine + ATP = glycyl-tRNA(Gly) + AMP + diphosphate. The sequence is that of Glycine--tRNA ligase alpha subunit (glyQ) from Helicobacter pylori (strain ATCC 700392 / 26695) (Campylobacter pylori).